A 191-amino-acid chain; its full sequence is Potassium-transporting ATPase KdpC subunit (191 aa).

The helical transmembrane segment at 13 to 35 (VLFTGLCGLAYPLAITGVAQAVL) threads the bilayer. The disordered stretch occupies residues 112 to 132 (SGPVPADAVTSSASGLDPDIS).

This sequence belongs to the KdpC family. In terms of assembly, the system is composed of three essential subunits: KdpA, KdpB and KdpC.

It is found in the cell inner membrane. Functionally, part of the high-affinity ATP-driven potassium transport (or Kdp) system, which catalyzes the hydrolysis of ATP coupled with the electrogenic transport of potassium into the cytoplasm. This subunit acts as a catalytic chaperone that increases the ATP-binding affinity of the ATP-hydrolyzing subunit KdpB by the formation of a transient KdpB/KdpC/ATP ternary complex. The chain is Potassium-transporting ATPase KdpC subunit from Allorhizobium ampelinum (strain ATCC BAA-846 / DSM 112012 / S4) (Agrobacterium vitis (strain S4)).